A 265-amino-acid polypeptide reads, in one-letter code: Lysosomal membrane ascorbate-dependent ferrireductase CYB561A3 (265 aa).

The Cytoplasmic portion of the chain corresponds to 1–2 (MA). Residues 3 to 23 (VGWFYLSVLALCSLGSMCILF) form a helical membrane-spanning segment. In terms of domain architecture, Cytochrome b561 spans 12–219 (ALCSLGSMCI…FGLLVLYILL (208 aa)). At 24–45 (TIYWMRYWHGGFAWDGSMLMFN) the chain is on the lumenal side. A helical membrane pass occupies residues 46 to 66 (WHPVLMVTGMVVLYSAASLVY). His47 and Arg67 together coordinate heme b. Over 67 to 83 (RLPQSWVGPRLPWKSGH) the chain is Cytoplasmic. Positions 76 and 80 each coordinate L-ascorbate. His83 contacts heme b. The chain crosses the membrane as a helical span at residues 84–104 (AAMHLLAFLLTVLGLHAVFEF). The Lumenal portion of the chain corresponds to 105 to 119 (HNHAKIPHLYSLHSW). Heme b contacts are provided by residues 112 to 115 (HLYS) and His117. A helical membrane pass occupies residues 120-140 (LGITTVFLFACQWFLGFSVFL). Topologically, residues 141-154 (LPWASMWLRSLLKP) are cytoplasmic. Arg149 serves as a coordination point for L-ascorbate. A helical transmembrane segment spans residues 155-175 (IHVFFGASILSLAIASVVSGI). The heme b site is built by His156 and Glu177. At 176–197 (NEKLFFSLKNGTKTYSNLPSEA) the chain is on the lumenal side. A glycan (N-linked (GlcNAc...) asparagine) is linked at Asn185. The chain crosses the membrane as a helical span at residues 198–218 (VFANCAGMLVVVFGLLVLYIL). The Cytoplasmic portion of the chain corresponds to 219-265 (LASSWKRPEPGMQAEREPTRTRGRAGTPEVMLEGERGLAEPLLQKRS). Lys224 is a binding site for heme b. A compositionally biased stretch (basic and acidic residues) spans 228–238 (PGMQAEREPTR). A disordered region spans residues 228-265 (PGMQAEREPTRTRGRAGTPEVMLEGERGLAEPLLQKRS).

In terms of assembly, homodimer. Heme b serves as cofactor. In terms of processing, N-glycosylated.

The protein resides in the late endosome membrane. The protein localises to the lysosome membrane. The catalysed reaction is Fe(3+)(out) + L-ascorbate(in) = monodehydro-L-ascorbate radical(in) + Fe(2+)(out) + H(+). Transmembrane reductase that uses ascorbate as an electron donor in the cytoplasm and transfers electrons across membranes to reduce iron cations Fe(3+) into Fe(2+) in the lumen of the late endosome and lysosome. Reduced iron can then be extruded from the late endosome and lysosome to the cytoplasm by divalent metal-specific transporters. It is therefore most probably involved in endosomal and lysosomal cellular iron homeostasis. This chain is Lysosomal membrane ascorbate-dependent ferrireductase CYB561A3, found in Bos taurus (Bovine).